Here is a 492-residue protein sequence, read N- to C-terminus: Cobyric acid synthase (492 aa).

The GATase cobBQ-type domain maps to 252 to 440 (QLNVVVPVLT…LHGIFEQTEA (189 aa)). The Nucleophile role is filled by Cys333. His432 is an active-site residue.

Belongs to the CobB/CobQ family. CobQ subfamily.

Its pathway is cofactor biosynthesis; adenosylcobalamin biosynthesis. Functionally, catalyzes amidations at positions B, D, E, and G on adenosylcobyrinic A,C-diamide. NH(2) groups are provided by glutamine, and one molecule of ATP is hydrogenolyzed for each amidation. This Photobacterium profundum (strain SS9) protein is Cobyric acid synthase.